A 156-amino-acid polypeptide reads, in one-letter code: Small ribosomal subunit protein eS19A (156 aa).

It belongs to the eukaryotic ribosomal protein eS19 family.

This chain is Small ribosomal subunit protein eS19A (RpS19a), found in Drosophila melanogaster (Fruit fly).